We begin with the raw amino-acid sequence, 610 residues long: Menin (610 aa).

The tract at residues 214–390 (GVAERSWLYL…SLLEAGEERP (177 aa)) is interaction with FANCD2. The disordered stretch occupies residues 460 to 552 (REAEAAEAEE…SPPPEGPVLT (93 aa)). The span at 484–500 (RRESKPEEPPPPKKPAL) shows a compositional bias: basic and acidic residues. Ser487 and Ser543 each carry phosphoserine. Residue Thr594 is modified to Phosphothreonine.

Component of the MLL-HCF complex, at least composed of KMT2A/MLL1, MEN1, ASH2L, RBBP5, DPY30, WDR5, HCFC1 and HCFC2. Component of the menin-associated histone methyltransferase complex, at least composed of KMT2B/MLL4, MEN1, ASH2L, RBBP5, DPY30 and WDR5. Interacts with POLR2B. Interacts with POLR2A phosphorylated at 'Ser-5', but not with the unphosphorylated, nor 'Ser-2' phosphorylated POLR2A forms. Interacts with FANCD2 and DBF4. Interacts with JUND (via MBM motif); inhibits the interaction of JUND with MAPK10 and the phosphorylation of JUND by MAP kinases MAPK8 and MAPK10. Interacts with SMAD3, but not with SMAD2, nor SMAD4. Directly interacts with NFKB1, NFKB2 and RELA. Interacts with KMT2A (via MBM motif). The KMT2A-MEN1 complex interacts with PSIP1 with a greater affinity as MEN1 enhances interaction of KMT2A with PSIP1. Interacts with the fusion protein KMT2A-MLLT3. As to expression, ubiquitous.

The protein localises to the nucleus. Essential component of a MLL/SET1 histone methyltransferase (HMT) complex, a complex that specifically methylates 'Lys-4' of histone H3 (H3K4). Functions as a transcriptional regulator. Binds to the TERT promoter and represses telomerase expression. Plays a role in TGFB1-mediated inhibition of cell-proliferation, possibly regulating SMAD3 transcriptional activity. Represses JUND-mediated transcriptional activation on AP1 sites, as well as that mediated by NFKB subunit RELA. Positively regulates HOXC8 and HOXC6 gene expression. May be involved in normal hematopoiesis through the activation of HOXA9 expression. May be involved in DNA repair. This chain is Menin (MEN1), found in Homo sapiens (Human).